The primary structure comprises 402 residues: Putative F-box protein At4g22180 (402 aa).

An F-box domain is found at 18 to 64 (PNSWSELPLDLLTAVFERLSYANFQRAKSVCSSWHSGSRQSVPIQIP).

In Arabidopsis thaliana (Mouse-ear cress), this protein is Putative F-box protein At4g22180.